The primary structure comprises 310 residues: Tagatose-6-phosphate kinase (310 aa).

This sequence belongs to the carbohydrate kinase PfkB family. LacC subfamily.

It catalyses the reaction D-tagatofuranose 6-phosphate + ATP = D-tagatofuranose 1,6-bisphosphate + ADP + H(+). It functions in the pathway carbohydrate metabolism; D-tagatose 6-phosphate degradation; D-glyceraldehyde 3-phosphate and glycerone phosphate from D-tagatose 6-phosphate: step 1/2. The sequence is that of Tagatose-6-phosphate kinase from Staphylococcus epidermidis (strain ATCC 35984 / DSM 28319 / BCRC 17069 / CCUG 31568 / BM 3577 / RP62A).